The following is a 479-amino-acid chain: Deoxyribodipyrimidine photo-lyase (479 aa).

The Photolyase/cryptochrome alpha/beta domain occupies 6–132 (APVIVWFRKD…TVRSFSGQLL (127 aa)). Position 226 (Tyr226) interacts with FAD. DNA is bound at residue Arg230. FAD is bound by residues 238–242 (TSLLS) and 277–284 (EIVWREFC). Interaction with DNA regions lie at residues 277-284 (EIVWREFC) and 343-344 (NR). 374–376 (DAD) is a binding site for FAD. Residue Gln406 coordinates DNA.

This sequence belongs to the DNA photolyase class-3 family. FAD serves as cofactor. It depends on (6R)-5,10-methylene-5,6,7,8-tetrahydrofolate as a cofactor.

The enzyme catalyses cyclobutadipyrimidine (in DNA) = 2 pyrimidine residues (in DNA).. Its function is as follows. Photolyase involved in the repair of UV radiation-induced DNA damage. By using blue-light energy, catalyzes the photoreactivation of cyclobutane pyrimidine dimers (CPDs), which are formed between adjacent bases on the same DNA strand upon exposure to ultraviolet radiation. Can repair CPD lesions in ssDNA as well as in dsDNA. In Agrobacterium fabrum (strain C58 / ATCC 33970) (Agrobacterium tumefaciens (strain C58)), this protein is Deoxyribodipyrimidine photo-lyase.